Consider the following 206-residue polypeptide: MKLDITTLDGGSAGSLELNEAIFGLEPRADILQRMVRYQLAKRRAGTHAVKNRSDVDRTTKKLYKQKGTGNARHGAASAPQFRGGGRAFGPVVRDHSHDLPKKVRALALKHALSSKAKTSTLIVVDDIKVDSHKTKAMIERFEKLGLSSALIIGGSEVDENFGRAARAIPKIDVLPVQGINVYDILRRDTLVLTRAAVDALEERFK.

It belongs to the universal ribosomal protein uL4 family. In terms of assembly, part of the 50S ribosomal subunit.

In terms of biological role, one of the primary rRNA binding proteins, this protein initially binds near the 5'-end of the 23S rRNA. It is important during the early stages of 50S assembly. It makes multiple contacts with different domains of the 23S rRNA in the assembled 50S subunit and ribosome. Its function is as follows. Forms part of the polypeptide exit tunnel. The polypeptide is Large ribosomal subunit protein uL4 (Methylorubrum populi (strain ATCC BAA-705 / NCIMB 13946 / BJ001) (Methylobacterium populi)).